The sequence spans 200 residues: Recombination protein RecR (200 aa).

The segment at 57 to 72 adopts a C4-type zinc-finger fold; it reads CSQCRDFTEEDTCNIC. The region spanning 81–176 is the Toprim domain; sequence GLLCVVEMPA…KVSRIAHGIP (96 aa).

Belongs to the RecR family.

Functionally, may play a role in DNA repair. It seems to be involved in an RecBC-independent recombinational process of DNA repair. It may act with RecF and RecO. The protein is Recombination protein RecR of Haemophilus influenzae (strain 86-028NP).